The sequence spans 335 residues: Glucokinase (335 aa).

11–16 contacts ATP; it reads ADIGGT.

The protein belongs to the bacterial glucokinase family.

Its subcellular location is the cytoplasm. The enzyme catalyses D-glucose + ATP = D-glucose 6-phosphate + ADP + H(+). The protein is Glucokinase of Stenotrophomonas maltophilia (strain K279a).